A 392-amino-acid polypeptide reads, in one-letter code: 5-amino-6-(D-ribitylamino)uracil--L-tyrosine 4-hydroxyphenyl transferase (392 aa).

A Radical SAM core domain is found at Val-60–Lys-307. Positions 74, 78, and 81 each coordinate [4Fe-4S] cluster.

This sequence belongs to the radical SAM superfamily. CofH family. Consists of two subunits, CofG and CofH. Requires [4Fe-4S] cluster as cofactor.

It catalyses the reaction 5-amino-6-(D-ribitylamino)uracil + L-tyrosine + S-adenosyl-L-methionine = 5-amino-5-(4-hydroxybenzyl)-6-(D-ribitylimino)-5,6-dihydrouracil + 2-iminoacetate + 5'-deoxyadenosine + L-methionine + H(+). It participates in cofactor biosynthesis; coenzyme F0 biosynthesis. In terms of biological role, catalyzes the radical-mediated synthesis of 5-amino-5-(4-hydroxybenzyl)-6-(D-ribitylimino)-5,6-dihydrouracil from 5-amino-6-(D-ribitylamino)uracil and L-tyrosine. The protein is 5-amino-6-(D-ribitylamino)uracil--L-tyrosine 4-hydroxyphenyl transferase of Synechocystis sp. (strain ATCC 27184 / PCC 6803 / Kazusa).